Consider the following 330-residue polypeptide: 4,5-dihydroxyphthalate decarboxylase (330 aa).

To P.putida DHP decarboxylase.

The catalysed reaction is 4,5-dihydroxyphthalate + H(+) = 3,4-dihydroxybenzoate + CO2. Its pathway is xenobiotic degradation; phthalate degradation; 3,4-dihydroxybenzoate from phthalate: step 3/3. The polypeptide is 4,5-dihydroxyphthalate decarboxylase (phtD) (Comamonas testosteroni (Pseudomonas testosteroni)).